We begin with the raw amino-acid sequence, 160 residues long: 2-amino-4-hydroxy-6-hydroxymethyldihydropteridine pyrophosphokinase (160 aa).

This sequence belongs to the HPPK family.

It carries out the reaction 6-hydroxymethyl-7,8-dihydropterin + ATP = (7,8-dihydropterin-6-yl)methyl diphosphate + AMP + H(+). It functions in the pathway cofactor biosynthesis; tetrahydrofolate biosynthesis; 2-amino-4-hydroxy-6-hydroxymethyl-7,8-dihydropteridine diphosphate from 7,8-dihydroneopterin triphosphate: step 4/4. Catalyzes the transfer of pyrophosphate from adenosine triphosphate (ATP) to 6-hydroxymethyl-7,8-dihydropterin, an enzymatic step in folate biosynthesis pathway. The protein is 2-amino-4-hydroxy-6-hydroxymethyldihydropteridine pyrophosphokinase (folK) of Aquifex aeolicus (strain VF5).